We begin with the raw amino-acid sequence, 114 residues long: Ig heavy chain V region GOM (114 aa).

The 112-residue stretch at 1 to 112 folds into the Ig-like domain; sequence EVQLVESGGD…YWGQGTLVTV (112 aa).

This Canis lupus familiaris (Dog) protein is Ig heavy chain V region GOM.